The following is a 571-amino-acid chain: Leucine aminopeptidase A1, chloroplastic (571 aa).

The transit peptide at 1–53 (MATLRVSSLFASSSSSLHSNPSVFTKYQSSPKWAFSFPVTPLCSKRSKRIVHC) directs the protein to the chloroplast. Mg(2+) contacts are provided by Lys-342 and Asp-347. The active site involves Lys-354. Residues Asp-367, Asp-427, and Glu-429 each contribute to the Mg(2+) site. Residue Arg-431 is part of the active site.

The protein belongs to the peptidase M17 family. Homohexamer (dimer of homotrimers). Mg(2+) serves as cofactor. Observed during floral development. Expressed in healthy and senescent leaves, cotyledons (emergence from seed coats), pistils, sepals, petals, stamens, and floral buds (at protein level). Present at very low levels in healthy leaves.

Its subcellular location is the plastid. It is found in the chloroplast. It catalyses the reaction Release of an N-terminal amino acid, Xaa-|-Yaa-, in which Xaa is preferably Leu, but may be other amino acids including Pro although not Arg or Lys, and Yaa may be Pro. Amino acid amides and methyl esters are also readily hydrolyzed, but rates on arylamides are exceedingly low.. The catalysed reaction is Release of N-terminal proline from a peptide.. Catalyzes the removal of unsubstituted N-terminal amino acids from various peptides. When associated as homohexamer, catalyzes the proteolyzes of Xaa-Leu dipeptides. Possesses leucine aminopeptidase activity against the model substrate leucine-amido methyl coumarin. Presumably involved in the processing and regular turnover of intracellular proteins. Regulates wound signaling and has a role in insect defense. In terms of biological role, functions as a molecular chaperone to protect proteins from heat-induced damage. This is Leucine aminopeptidase A1, chloroplastic from Solanum lycopersicum (Tomato).